The primary structure comprises 268 residues: Putative esterase/lipase 1 (268 aa).

The active site involves H27. The active-site Charge relay system is S94.

It belongs to the lipase/esterase LIP3/BchO family.

The protein is Putative esterase/lipase 1 of Mycoplasma genitalium (strain ATCC 33530 / DSM 19775 / NCTC 10195 / G37) (Mycoplasmoides genitalium).